Here is a 679-residue protein sequence, read N- to C-terminus: Leucine-rich repeat, immunoglobulin-like domain and transmembrane domain-containing protein 3 (679 aa).

An N-terminal signal peptide occupies residues 1 to 19 (MHLFACLCIVLSFLEGVGC). Over 20–582 (LCPSQCTCDY…RVEGDDSQWS (563 aa)) the chain is Lumenal. 5 LRR repeats span residues 56 to 79 (PVDT…AFYY), 80 to 103 (LVEL…SFYN), 104 to 128 (LKQL…LLDM), 129 to 151 (PLLR…ALRY), and 152 to 175 (LKNL…FLES). An LRRCT domain is found at 201–253 (NPWFCDCHISKMIELSKVVDPAIVLLDPLMTCSEPERLTGILFQRAELEHCLK). An Ig-like domain is found at 254–344 (PSVMTSATKI…GMSEAVVTVT (91 aa)). Cysteine 275 and cysteine 328 form a disulfide bridge. An N-linked (GlcNAc...) asparagine glycan is attached at asparagine 296. The tract at residues 351-375 (TPIPPDTSERTGDHPEWDVQPGSGR) is disordered. Residues 357-367 (TSERTGDHPEW) show a composition bias toward basic and acidic residues. Positions 486-574 (AIENLRVVSE…QCITFSTERV (89 aa)) constitute a Fibronectin type-III domain. A helical membrane pass occupies residues 583–603 (LLLVVTSTACVVILPLICFLL). The Cytoplasmic segment spans residues 604 to 679 (YKVCKLQCKS…SEGSRPEYYC (76 aa)).

In terms of processing, glycosylated. Detected in the outer plexiform layer (OPL) of the retina where it localizes to ON-bipolar cells (at protein level).

The protein resides in the cell projection. The protein localises to the dendrite. It is found in the perikaryon. It localises to the endoplasmic reticulum membrane. In terms of biological role, plays a role in the synapse formation and synaptic transmission between cone photoreceptor cells and retinal bipolar cells. Required for normal transmission of a light-evoked stimulus from the cone photoreceptor cells to the ON-bipolar cells and ON-ganglion cells in the inner retina. Required in retinal ON-bipolar cells for normal localization of the cation channel TRPM1 at dendrite tips. Seems to play a specific role in synaptic contacts made by ON-bipolar cells with cone photoreceptor pedicles. May also have a role in cone synapse formation. Might facilitate FGFR1 exit from the endoplasmic reticulum to the Golgi. Could be a regulator of the FGFRs. The chain is Leucine-rich repeat, immunoglobulin-like domain and transmembrane domain-containing protein 3 (LRIT3) from Homo sapiens (Human).